Reading from the N-terminus, the 685-residue chain is Sodium/glucose cotransporter 4 (685 aa).

Residues 1 to 20 (MNTELVAMEPGVSRNGVRTE) form a disordered region. The Extracellular portion of the chain corresponds to 1–32 (MNTELVAMEPGVSRNGVRTETTTNPSLGLHTY). The chain crosses the membrane as a helical span at residues 33 to 53 (DIVVVVIYFVFVLAVGIWSSI). Residues 54–71 (RASRGTVGGYFLAGRSMT) are Cytoplasmic-facing. A helical membrane pass occupies residues 72-94 (WWPIGASLMSSNVGSGLFIGLAG). The Extracellular portion of the chain corresponds to 95-110 (TGAAGGLAVGGFEWNA). Residues 111–131 (TFLLLALGWIFVPVYIAAGVV) form a helical membrane-spanning segment. Topologically, residues 132–153 (TMPQYLKKRFGGQRIQVYMSVL) are cytoplasmic. The helical transmembrane segment at 154-174 (SLILYIFTKISTDIFSGALFI) threads the bilayer. Topologically, residues 175–186 (QMALGWNLYLST) are extracellular. A helical transmembrane segment spans residues 187 to 207 (VILLVVTAVYTIAGGLTAVIY). Residues 208–213 (TDALQT) lie on the Cytoplasmic side of the membrane. A helical membrane pass occupies residues 214–234 (VIMVGGALVLMFLGFQEVGWY). At 235–271 (PGLQQLYRQAIPNTTVPNTTCHLPRPDAFHMLRDPVN) the chain is on the extracellular side. Asn247 carries N-linked (GlcNAc...) asparagine glycosylation. Residues 272-292 (GDIPWPGLIFGLTVLATWCWC) traverse the membrane as a helical segment. Topologically, residues 293–313 (TDQVIVQRSLAAKNLSHAKGG) are cytoplasmic. The chain crosses the membrane as a helical span at residues 314 to 334 (SVLGGYLKILPMFFIVMPGMI). The Extracellular portion of the chain corresponds to 335–379 (SRALYPDEVACVDPDICQRVCGARVGCSNIAYPKLVMALMPVGLR). Residues 380 to 402 (GLMIAVIMAALMSSLTSIFNSSS) traverse the membrane as a helical segment. The Cytoplasmic portion of the chain corresponds to 403–423 (TLFAIDVWQRFRRQASEQELM). The helical transmembrane segment at 424 to 444 (VVGRLFVVFLVVISILWIPII) threads the bilayer. The Extracellular segment spans residues 445-455 (QSSNSGQLFDY). A helical membrane pass occupies residues 456–476 (IQSITSYLAPPITALFLLAIF). At 477–483 (CKRVNEP) the chain is on the cytoplasmic side. The helical transmembrane segment at 484–504 (GAFWGLMFGLVVGILRMILEF) threads the bilayer. Residues 505 to 526 (SYSAPACGEMDRRPAVLKDFHY) are Extracellular-facing. A helical transmembrane segment spans residues 527-547 (LYFALLLCGLTAIIIVVISFF). The Cytoplasmic segment spans residues 548-664 (TEPIPDDKLA…SIEEEPLWRR (117 aa)). The segment at 577–616 (VSVNNTEDDNSPGLAGRPVVEGPAGDEEEANTTQGPEQPG) is disordered. A helical membrane pass occupies residues 665 to 685 (VCNINAIILLAINIFLWGYFA).

Belongs to the sodium:solute symporter (SSF) (TC 2.A.21) family.

It is found in the cell membrane. The catalysed reaction is D-mannose(out) + n Na(+)(out) = D-mannose(in) + n Na(+)(in). Its function is as follows. Electrogenic Na(+)-coupled sugar symporter that may play a primary role in D-mannose and possibly D-fructose and D-glucose transport at the plasma membrane. Transporter activity is driven by a transmembrane Na(+) electrochemical gradient set by the Na(+)/K(+) pump. Exclusively recognizes sugar substrates having a pyranose ring with an axial hydroxyl group on carbon 2. This is Sodium/glucose cotransporter 4 (Slc5a9) from Mus musculus (Mouse).